The sequence spans 133 residues: Small ribosomal subunit protein uS8 (133 aa).

The protein belongs to the universal ribosomal protein uS8 family. Part of the 30S ribosomal subunit. Contacts proteins S5 and S12.

Functionally, one of the primary rRNA binding proteins, it binds directly to 16S rRNA central domain where it helps coordinate assembly of the platform of the 30S subunit. This is Small ribosomal subunit protein uS8 from Prochlorococcus marinus (strain AS9601).